Consider the following 116-residue polypeptide: Ig heavy chain V region 441 (116 aa).

An N-terminal signal peptide occupies residues 1 to 18 (MDFGLIFFIVALLKGVQC). The 98-residue stretch at 19 to 116 (EVKLLESGGG…EDTALYYCAR (98 aa)) folds into the Ig-like domain.

The sequence is that of Ig heavy chain V region 441 from Mus musculus (Mouse).